The following is a 230-amino-acid chain: Cytidylate kinase (230 aa).

12–20 lines the ATP pocket; it reads GPSGAGKGT.

It belongs to the cytidylate kinase family. Type 1 subfamily.

The protein resides in the cytoplasm. The catalysed reaction is CMP + ATP = CDP + ADP. The enzyme catalyses dCMP + ATP = dCDP + ADP. The polypeptide is Cytidylate kinase (Shewanella oneidensis (strain ATCC 700550 / JCM 31522 / CIP 106686 / LMG 19005 / NCIMB 14063 / MR-1)).